A 253-amino-acid chain; its full sequence is Sortase SrtE2 (253 aa).

Basic and acidic residues predominate over residues 1–11 (MAATTDTEHQE). The disordered stretch occupies residues 1–23 (MAATTDTEHQEQAGTGGRGRRRP). A helical membrane pass occupies residues 30–50 (AVSVLGELLITAGLVMGLFVV). Residues 69–89 (EKVRDDWAQDRVGGSGQDGPG) form a disordered region. Residue Cys-220 is part of the active site.

It belongs to the bacterial sortase family. Class E subfamily.

The protein localises to the cell membrane. It catalyses the reaction The enzyme catalyzes a cell wall sorting reaction in which a surface protein with a sorting signal containing a LPXTG motif is cleaved between the Thr and Gly residue. The resulting threonine carboxyl end of the protein is covalently attached to a pentaglycine cross-bridge of peptidoglycan.. Transpeptidase that anchors surface proteins to the cell wall. Recognizes Leu-Ala-x-Thr-Gly and Leu-Pro-x-Thr-Gly, with a preference for the former. Unlike the S.aureus sortase it cleaves not only the Thr-Gly motif but also the Ala-X bond; an Ala-Glu bond is a better substrate than the Thr-Gly motif in vitro. Among its possible substrates are the chaplins ChpA, ChpB and ChpC; this enzyme is more important for ChpC attachment than is SrtE1. A double knockout mutant of srtE1 and srtE2 shows a developmental defect in aerial hyphae formation more dramatic than that due to chaplin deletion. The sequence is that of Sortase SrtE2 from Streptomyces coelicolor (strain ATCC BAA-471 / A3(2) / M145).